Consider the following 123-residue polypeptide: Small ribosomal subunit protein uS12 (123 aa).

A 3-methylthioaspartic acid modification is found at Asp89.

This sequence belongs to the universal ribosomal protein uS12 family. Part of the 30S ribosomal subunit. Contacts proteins S8 and S17. May interact with IF1 in the 30S initiation complex.

In terms of biological role, with S4 and S5 plays an important role in translational accuracy. Functionally, interacts with and stabilizes bases of the 16S rRNA that are involved in tRNA selection in the A site and with the mRNA backbone. Located at the interface of the 30S and 50S subunits, it traverses the body of the 30S subunit contacting proteins on the other side and probably holding the rRNA structure together. The combined cluster of proteins S8, S12 and S17 appears to hold together the shoulder and platform of the 30S subunit. In Prochlorococcus marinus (strain MIT 9211), this protein is Small ribosomal subunit protein uS12.